The following is a 179-amino-acid chain: Large ribosomal subunit protein uL6 (179 aa).

Belongs to the universal ribosomal protein uL6 family. As to quaternary structure, part of the 50S ribosomal subunit.

Its function is as follows. This protein binds to the 23S rRNA, and is important in its secondary structure. It is located near the subunit interface in the base of the L7/L12 stalk, and near the tRNA binding site of the peptidyltransferase center. The polypeptide is Large ribosomal subunit protein uL6 (Chlorobium limicola (strain DSM 245 / NBRC 103803 / 6330)).